We begin with the raw amino-acid sequence, 539 residues long: Chaperonin GroEL (539 aa).

ATP is bound by residues 30-33 (TLGP), 87-91 (DGTTT), G414, 479-481 (DAL), and D495.

This sequence belongs to the chaperonin (HSP60) family. As to quaternary structure, forms a cylinder of 14 subunits composed of two heptameric rings stacked back-to-back. Interacts with the co-chaperonin GroES.

It is found in the cytoplasm. It carries out the reaction ATP + H2O + a folded polypeptide = ADP + phosphate + an unfolded polypeptide.. Functionally, together with its co-chaperonin GroES, plays an essential role in assisting protein folding. The GroEL-GroES system forms a nano-cage that allows encapsulation of the non-native substrate proteins and provides a physical environment optimized to promote and accelerate protein folding. The chain is Chaperonin GroEL from Caldicellulosiruptor saccharolyticus (strain ATCC 43494 / DSM 8903 / Tp8T 6331).